A 115-amino-acid polypeptide reads, in one-letter code: MATIQFIQGINEEVVPDVRLTRSRDGSTGTATFRFTNPKILDASMADKGEITGMYLMDTEGQIITRDVNAKFINGKPQAIEAVHVIKSPDDWDRFMRFMERYAQDNGLTFTKASS.

It belongs to the Psb28 family. Part of the photosystem II complex.

The protein resides in the plastid. It localises to the chloroplast thylakoid membrane. This chain is Photosystem II reaction center Psb28 protein, found in Pyropia yezoensis (Susabi-nori).